The sequence spans 238 residues: Probable transcriptional regulatory protein CHU_3516 (238 aa).

Belongs to the TACO1 family.

It localises to the cytoplasm. This is Probable transcriptional regulatory protein CHU_3516 from Cytophaga hutchinsonii (strain ATCC 33406 / DSM 1761 / CIP 103989 / NBRC 15051 / NCIMB 9469 / D465).